A 44-amino-acid chain; its full sequence is Photosystem I reaction center subunit IX (44 aa).

A helical membrane pass occupies residues 7–27 (YLSVAPVLSTLWFGSLAGLLI).

This sequence belongs to the PsaJ family.

It localises to the plastid. It is found in the chloroplast thylakoid membrane. Functionally, may help in the organization of the PsaE and PsaF subunits. The sequence is that of Photosystem I reaction center subunit IX from Fagopyrum esculentum subsp. ancestrale (Wild buckwheat).